The sequence spans 292 residues: 4-hydroxy-tetrahydrodipicolinate synthase (292 aa).

Thr-45 provides a ligand contact to pyruvate. Catalysis depends on Tyr-133, which acts as the Proton donor/acceptor. The active-site Schiff-base intermediate with substrate is the Lys-161. Ile-203 provides a ligand contact to pyruvate.

Belongs to the DapA family. Homotetramer; dimer of dimers.

The protein resides in the cytoplasm. The catalysed reaction is L-aspartate 4-semialdehyde + pyruvate = (2S,4S)-4-hydroxy-2,3,4,5-tetrahydrodipicolinate + H2O + H(+). The protein operates within amino-acid biosynthesis; L-lysine biosynthesis via DAP pathway; (S)-tetrahydrodipicolinate from L-aspartate: step 3/4. Catalyzes the condensation of (S)-aspartate-beta-semialdehyde [(S)-ASA] and pyruvate to 4-hydroxy-tetrahydrodipicolinate (HTPA). This is 4-hydroxy-tetrahydrodipicolinate synthase from Azoarcus sp. (strain BH72).